The chain runs to 499 residues: Gypsy retrotransposon integrase-like protein 1 (499 aa).

An Integrase catalytic domain is found at 113 to 270 (KVENPWSIVT…TPYFQMFNRN (158 aa)).

The protein is Gypsy retrotransposon integrase-like protein 1 (GIN1) of Bos taurus (Bovine).